Here is a 331-residue protein sequence, read N- to C-terminus: Fructose-1,6-bisphosphatase class 1 (331 aa).

Mg(2+) contacts are provided by glutamate 100, aspartate 120, leucine 122, and aspartate 123. Residues 123–126 (DGSS), asparagine 216, tyrosine 243, 261–263 (YLY), and lysine 273 each bind substrate. Glutamate 279 contributes to the Mg(2+) binding site.

Belongs to the FBPase class 1 family. As to quaternary structure, homotetramer. Mg(2+) is required as a cofactor.

The protein resides in the cytoplasm. The catalysed reaction is beta-D-fructose 1,6-bisphosphate + H2O = beta-D-fructose 6-phosphate + phosphate. It functions in the pathway carbohydrate biosynthesis; gluconeogenesis. In Amoebophilus asiaticus (strain 5a2), this protein is Fructose-1,6-bisphosphatase class 1.